We begin with the raw amino-acid sequence, 1171 residues long: DNA-directed RNA polymerase subunit beta' (1171 aa).

The Zn(2+) site is built by C60, C62, C75, and C78. A disordered region spans residues 299–319 (GRRGKPVTGPGNRPLKSLSDM). Mg(2+) is bound by residues D449, D451, and D453. Residues C790, C864, C871, and C874 each contribute to the Zn(2+) site.

This sequence belongs to the RNA polymerase beta' chain family. In terms of assembly, the RNAP catalytic core consists of 2 alpha, 1 beta, 1 beta' and 1 omega subunit. When a sigma factor is associated with the core the holoenzyme is formed, which can initiate transcription. Mg(2+) is required as a cofactor. Zn(2+) serves as cofactor.

It carries out the reaction RNA(n) + a ribonucleoside 5'-triphosphate = RNA(n+1) + diphosphate. In terms of biological role, DNA-dependent RNA polymerase catalyzes the transcription of DNA into RNA using the four ribonucleoside triphosphates as substrates. This is DNA-directed RNA polymerase subunit beta' from Alkaliphilus metalliredigens (strain QYMF).